The primary structure comprises 462 residues: ATP synthase subunit beta (462 aa).

152–159 (GGAGVGKT) contacts ATP.

Belongs to the ATPase alpha/beta chains family. F-type ATPases have 2 components, CF(1) - the catalytic core - and CF(0) - the membrane proton channel. CF(1) has five subunits: alpha(3), beta(3), gamma(1), delta(1), epsilon(1). CF(0) has three main subunits: a(1), b(2) and c(9-12). The alpha and beta chains form an alternating ring which encloses part of the gamma chain. CF(1) is attached to CF(0) by a central stalk formed by the gamma and epsilon chains, while a peripheral stalk is formed by the delta and b chains.

It is found in the cell inner membrane. It catalyses the reaction ATP + H2O + 4 H(+)(in) = ADP + phosphate + 5 H(+)(out). Functionally, produces ATP from ADP in the presence of a proton gradient across the membrane. The catalytic sites are hosted primarily by the beta subunits. This Shewanella amazonensis (strain ATCC BAA-1098 / SB2B) protein is ATP synthase subunit beta.